The primary structure comprises 156 residues: MPRRRVIGQRKILPDPKFGSELLAKFVNILMVDGKKSTAESIAYSALETLAQRSGKSELEAFEVALENVRPTVEVKSRRVGGSTYQVPVEVRPVRRNALAMRWIVEAARKRGDKSMALRLANELSDAADNKGTAVKKREDVHRMAEANKAFAHYRW.

This sequence belongs to the universal ribosomal protein uS7 family. Part of the 30S ribosomal subunit. Contacts proteins S9 and S11.

One of the primary rRNA binding proteins, it binds directly to 16S rRNA where it nucleates assembly of the head domain of the 30S subunit. Is located at the subunit interface close to the decoding center, probably blocks exit of the E-site tRNA. The protein is Small ribosomal subunit protein uS7 of Salmonella choleraesuis (strain SC-B67).